Reading from the N-terminus, the 119-residue chain is NADH-quinone oxidoreductase subunit A (119 aa).

A run of 3 helical transmembrane segments spans residues 7–27, 63–83, and 88–108; these read FPVLLFIIIGVGLGLALMTIG, LIAILFILFDLETAFLFPWGV, and IGWPGFFAMGVFLLEFLVGFV.

This sequence belongs to the complex I subunit 3 family. NDH-1 is composed of 14 different subunits. Subunits NuoA, H, J, K, L, M, N constitute the membrane sector of the complex.

The protein resides in the cell inner membrane. It carries out the reaction a quinone + NADH + 5 H(+)(in) = a quinol + NAD(+) + 4 H(+)(out). In terms of biological role, NDH-1 shuttles electrons from NADH, via FMN and iron-sulfur (Fe-S) centers, to quinones in the respiratory chain. The immediate electron acceptor for the enzyme in this species is believed to be ubiquinone. Couples the redox reaction to proton translocation (for every two electrons transferred, four hydrogen ions are translocated across the cytoplasmic membrane), and thus conserves the redox energy in a proton gradient. The polypeptide is NADH-quinone oxidoreductase subunit A (Ralstonia nicotianae (strain ATCC BAA-1114 / GMI1000) (Ralstonia solanacearum)).